We begin with the raw amino-acid sequence, 238 residues long: Octanoyltransferase (238 aa).

Residues 44–224 (AGGPDSLLLL…AVLDALDGRI (181 aa)) form the BPL/LPL catalytic domain. Residues 82–89 (RGGKITWH), 154–156 (AIG), and 167–169 (GFA) each bind substrate. Residue C185 is the Acyl-thioester intermediate of the active site.

The protein belongs to the LipB family.

It is found in the cytoplasm. The catalysed reaction is octanoyl-[ACP] + L-lysyl-[protein] = N(6)-octanoyl-L-lysyl-[protein] + holo-[ACP] + H(+). It functions in the pathway protein modification; protein lipoylation via endogenous pathway; protein N(6)-(lipoyl)lysine from octanoyl-[acyl-carrier-protein]: step 1/2. In terms of biological role, catalyzes the transfer of endogenously produced octanoic acid from octanoyl-acyl-carrier-protein onto the lipoyl domains of lipoate-dependent enzymes. Lipoyl-ACP can also act as a substrate although octanoyl-ACP is likely to be the physiological substrate. This Mycolicibacterium gilvum (strain PYR-GCK) (Mycobacterium gilvum (strain PYR-GCK)) protein is Octanoyltransferase.